The chain runs to 236 residues: AENTVSFDFSKFLSGQENLILQGDTVTDDSNRCLVLTRENNGRPVQDSVGRVLYQTPIHLWDKQIDKEASFETSFTFFIYRENINRGGDGITFFLAPTDTQPKSGGGYLGIFKDAESNETVVAVEFDTFSNRWDPANSHIGINVNSVKSKITTPWGLKNDYFTVTITYDATRSLSVSSFYRNKPDDIFTVKASVHLRDALPQWVRIGLSAATGDLVEQHRLYSWSFKSVLPLDSST.

The N-linked (GlcNAc...) asparagine glycan is linked to asparagine 118.

This sequence belongs to the leguminous lectin family. In terms of assembly, homodimer of noncovalently associated chains.

In terms of biological role, D-mannose and D-glucose specific lectin. The chain is Lectin from Onobrychis viciifolia (Common sainfoin).